Consider the following 306-residue polypeptide: MSNVYERWKEFYEDAISRDIPGVKTAEKIAYFGIGGSGIPGEVLKLLDLPVEYKLFRSYKVNVDSKTTVVAVSYSGNTAETLAGVKRAQELGVKEIIVITSGGKLKEIAESKGYPLLSLPQGYQTRFIFPYIFTYLVRILNQSTGSNYRVQDLVDGIQDNFTMLSEVSTRIANRITGKVPIFYASDLLPIAERFKQEVNENAKYPAFFSQLPEANHNEIELYSSQQGNQFIPIVIPSDKIDEATASLINAELIYPPYKSILKNISGMFLIAGLASVKLASQLNIKAEELRIIPKIRERTHNLLMGG.

The SIS domain occupies 19–153 (DIPGVKTAEK…TGSNYRVQDL (135 aa)). Glu-200 serves as the catalytic Proton acceptor. His-216 functions as the Proton donor in the catalytic mechanism. Arg-296 functions as the Proton acceptor in the catalytic mechanism.

The protein belongs to the PGI/PMI family.

The catalysed reaction is D-glucosamine 6-phosphate = D-galactosamine 6-phosphate. Functionally, involved in the synthesis of UDP-N-acetylgalactosamine (UDP-GalNAc). Catalyzes the conversion of glucosamine-6-phosphate (GlcN-6-P) to galactosamine-6-phosphate (GalN-6-P). The protein is D-glucosamine-6-phosphate 4-epimerase of Sulfolobus acidocaldarius (strain ATCC 33909 / DSM 639 / JCM 8929 / NBRC 15157 / NCIMB 11770).